The primary structure comprises 293 residues: tRNA-cytidine(32) 2-sulfurtransferase (293 aa).

The PP-loop motif signature appears at 71 to 76; the sequence is SGGKDS. [4Fe-4S] cluster contacts are provided by C146, C149, and C237.

It belongs to the TtcA family. Homodimer. The cofactor is Mg(2+). Requires [4Fe-4S] cluster as cofactor.

Its subcellular location is the cytoplasm. It catalyses the reaction cytidine(32) in tRNA + S-sulfanyl-L-cysteinyl-[cysteine desulfurase] + AH2 + ATP = 2-thiocytidine(32) in tRNA + L-cysteinyl-[cysteine desulfurase] + A + AMP + diphosphate + H(+). The protein operates within tRNA modification. In terms of biological role, catalyzes the ATP-dependent 2-thiolation of cytidine in position 32 of tRNA, to form 2-thiocytidine (s(2)C32). The sulfur atoms are provided by the cysteine/cysteine desulfurase (IscS) system. This Sinorhizobium medicae (strain WSM419) (Ensifer medicae) protein is tRNA-cytidine(32) 2-sulfurtransferase.